The following is a 479-amino-acid chain: Something about silencing protein 10 (479 aa).

Over residues 1–10 (MVGRSRRRGA) the composition is skewed to basic residues. Disordered stretches follow at residues 1–45 (MVGR…SYYQ) and 62–166 (KGWN…EEAQ). Arginine 8 is subject to Omega-N-methylarginine. The segment covering 11–21 (AKWAAVRAKAG) has biased composition (low complexity). Residue serine 37 is modified to Phosphoserine. The segment covering 69–111 (SGDEEDGEEEEEEVLALDMDDEDDEDGGNAGEEEEEENADDDG) has biased composition (acidic residues). N6-acetyllysine; alternate is present on lysine 144. Lysine 144 is covalently cross-linked (Glycyl lysine isopeptide (Lys-Gly) (interchain with G-Cter in SUMO2); alternate). Serine 150 is subject to Phosphoserine. Residues 153–165 (EAEEEEREEEEEA) show a composition bias toward acidic residues. A Phosphothreonine modification is found at threonine 362. Phosphoserine is present on residues serine 365 and serine 368. Arginine 385 bears the Citrulline mark. The tract at residues 419 to 466 (RGLTPRRKKIDRNPRVKHREKFRRAKIRRRGQVREVRKEEQRYSGELS) is disordered. The segment covering 422 to 449 (TPRRKKIDRNPRVKHREKFRRAKIRRRG) has biased composition (basic residues). The segment covering 450–461 (QVREVRKEEQRY) has biased composition (basic and acidic residues).

The protein belongs to the SAS10 family. In terms of assembly, part of the small subunit (SSU) processome, composed of more than 70 proteins and the RNA chaperone small nucleolar RNA (snoRNA) U3. Citrullinated by PADI4.

The protein localises to the nucleus. Its subcellular location is the nucleolus. In terms of biological role, essential for gene silencing: has a role in the structure of silenced chromatin. Plays a role in the developing brain. Part of the small subunit (SSU) processome, first precursor of the small eukaryotic ribosomal subunit. During the assembly of the SSU processome in the nucleolus, many ribosome biogenesis factors, an RNA chaperone and ribosomal proteins associate with the nascent pre-rRNA and work in concert to generate RNA folding, modifications, rearrangements and cleavage as well as targeted degradation of pre-ribosomal RNA by the RNA exosome. This is Something about silencing protein 10 from Homo sapiens (Human).